The following is a 607-amino-acid chain: uncharacterized protein (607 aa).

Disordered regions lie at residues 28–114 (GAER…KLRR) and 142–188 (DQER…NNSS). Over residues 35-50 (SSHGSINSRSASPNKA) the composition is skewed to polar residues. Composition is skewed to basic and acidic residues over residues 90–102 (VNGE…DHDT) and 161–174 (KENK…KDLS). Residues 177–188 (SSSSMKKANNSS) show a composition bias toward low complexity. 2 consecutive PHD-type zinc fingers follow at residues 263 to 312 (NDYC…CKHH) and 406 to 459 (PILC…HSDH).

This is an uncharacterized protein from Schizosaccharomyces pombe (strain 972 / ATCC 24843) (Fission yeast).